The sequence spans 226 residues: Elongation factor G (226 aa).

The protein belongs to the GTP-binding elongation factor family. EF-G/EF-2 subfamily.

It is found in the cytoplasm. Catalyzes the GTP-dependent ribosomal translocation step during translation elongation. During this step, the ribosome changes from the pre-translocational (PRE) to the post-translocational (POST) state as the newly formed A-site-bound peptidyl-tRNA and P-site-bound deacylated tRNA move to the P and E sites, respectively. Catalyzes the coordinated movement of the two tRNA molecules, the mRNA and conformational changes in the ribosome. The protein is Elongation factor G (fusA) of Neisseria gonorrhoeae.